The chain runs to 757 residues: RNA-directed RNA polymerase catalytic subunit (757 aa).

Positions 53 to 82 are disordered; the sequence is GRWTKNTETGAPQLNPIDGPLPKDNEPSGY. 2 consecutive short sequence motifs (nuclear localization signal) follow at residues 187–195 and 203–216; these read RKRRVRDNV and RTIG…NKRS. Residues 249 to 256 are promoter-binding site; the sequence is RGFVYFVE. Positions 286–483 constitute a RdRp catalytic domain; it reads VRKMMTNSQD…GINMSKKKSY (198 aa).

This sequence belongs to the influenza viruses polymerase PB1 family. In terms of assembly, influenza RNA polymerase is composed of three subunits: PB1, PB2 and PA. Interacts (via N-terminus) with PA (via C-terminus). Interacts (via C-terminus) with PB2 (via N-terminus); this interaction is essential for transcription initiation. Interacts (via C-terminus) with human PKP2 (via N-terminus); the interaction competitively inhibits the interaction between the RNA polymerase subunits PB1 and PB2. In terms of processing, phosphorylated by host PRKCA.

The protein resides in the host nucleus. It localises to the host cytoplasm. It catalyses the reaction RNA(n) + a ribonucleoside 5'-triphosphate = RNA(n+1) + diphosphate. Its function is as follows. RNA-dependent RNA polymerase which is responsible for replication and transcription of virus RNA segments. The transcription of viral mRNAs occurs by a unique mechanism called cap-snatching. 5' methylated caps of cellular mRNAs are cleaved after 10-13 nucleotides by PA. In turn, these short capped RNAs are used as primers by PB1 for transcription of viral mRNAs. During virus replication, PB1 initiates RNA synthesis and copy vRNA into complementary RNA (cRNA) which in turn serves as a template for the production of more vRNAs. This Aves (Human) protein is RNA-directed RNA polymerase catalytic subunit.